The primary structure comprises 374 residues: UPF0754 membrane protein NWMN_1738 (374 aa).

2 consecutive transmembrane segments (helical) span residues Leu-4–Ile-24 and Ser-354–Val-374.

Belongs to the UPF0754 family.

It localises to the cell membrane. The sequence is that of UPF0754 membrane protein NWMN_1738 from Staphylococcus aureus (strain Newman).